Reading from the N-terminus, the 120-residue chain is Large ribosomal subunit protein uL18 (120 aa).

It belongs to the universal ribosomal protein uL18 family. As to quaternary structure, part of the 50S ribosomal subunit; part of the 5S rRNA/L5/L18/L25 subcomplex. Contacts the 5S and 23S rRNAs.

Its function is as follows. This is one of the proteins that bind and probably mediate the attachment of the 5S RNA into the large ribosomal subunit, where it forms part of the central protuberance. The polypeptide is Large ribosomal subunit protein uL18 (Methylobacterium nodulans (strain LMG 21967 / CNCM I-2342 / ORS 2060)).